The chain runs to 90 residues: Small ribosomal subunit protein bS16 (90 aa).

Belongs to the bacterial ribosomal protein bS16 family.

This is Small ribosomal subunit protein bS16 from Anoxybacillus flavithermus (strain DSM 21510 / WK1).